The following is a 416-amino-acid chain: Serine hydroxymethyltransferase (416 aa).

(6S)-5,6,7,8-tetrahydrofolate is bound by residues leucine 121 and 125–127; that span reads GHL. An N6-(pyridoxal phosphate)lysine modification is found at lysine 229. (6S)-5,6,7,8-tetrahydrofolate is bound by residues glutamate 245 and 354-356; that span reads SPF.

This sequence belongs to the SHMT family. Homodimer. It depends on pyridoxal 5'-phosphate as a cofactor.

Its subcellular location is the cytoplasm. The catalysed reaction is (6R)-5,10-methylene-5,6,7,8-tetrahydrofolate + glycine + H2O = (6S)-5,6,7,8-tetrahydrofolate + L-serine. The protein operates within one-carbon metabolism; tetrahydrofolate interconversion. It functions in the pathway amino-acid biosynthesis; glycine biosynthesis; glycine from L-serine: step 1/1. In terms of biological role, catalyzes the reversible interconversion of serine and glycine with tetrahydrofolate (THF) serving as the one-carbon carrier. This reaction serves as the major source of one-carbon groups required for the biosynthesis of purines, thymidylate, methionine, and other important biomolecules. Also exhibits THF-independent aldolase activity toward beta-hydroxyamino acids, producing glycine and aldehydes, via a retro-aldol mechanism. The sequence is that of Serine hydroxymethyltransferase from Aliivibrio salmonicida (strain LFI1238) (Vibrio salmonicida (strain LFI1238)).